The following is a 365-amino-acid chain: Peptide chain release factor 2 (365 aa).

N5-methylglutamine is present on Q252.

The protein belongs to the prokaryotic/mitochondrial release factor family. Methylated by PrmC. Methylation increases the termination efficiency of RF2.

It localises to the cytoplasm. Its function is as follows. Peptide chain release factor 2 directs the termination of translation in response to the peptide chain termination codons UGA and UAA. This Haemophilus influenzae (strain ATCC 51907 / DSM 11121 / KW20 / Rd) protein is Peptide chain release factor 2 (prfB).